Reading from the N-terminus, the 745-residue chain is Phosphate transporter PHO1 homolog 4 (745 aa).

An SPX domain is found at 1 to 290; sequence MRFGKEFVSQ…KRNAAKLYME (290 aa). The Cytoplasmic portion of the chain corresponds to 1–342; that stretch reads MRFGKEFVSQ…KINKERHLIT (342 aa). The chain crosses the membrane as a helical span at residues 343 to 363; the sequence is FSTGFFFGCGISLIVALGLII. The Extracellular portion of the chain corresponds to 364 to 383; that stretch reads HARNIMGTPGQRTYMETMFP. A helical transmembrane segment spans residues 384–404; sequence LYRFFGFVVLHMDVYAANIYF. The Cytoplasmic segment spans residues 405 to 427; that stretch reads WRRYRVNYSFIFGFKQGTELGYR. The helical transmembrane segment at 428-448 threads the bilayer; that stretch reads HVLLLSFGLGTLSLCAVLLNL. Residues 449-464 are Extracellular-facing; that stretch reads DMEMDAQTKDYRLVTE. A helical membrane pass occupies residues 465–485; the sequence is LIPLFLLVLVIIIVLCPFNIL. Over 486–615 the chain is Cytoplasmic; sequence YRSSRFFFLS…YTLNRGSNWN (130 aa). Residues 550–744 form the EXS domain; sequence TSNIGFRTFY…NYEEDGDHHN (195 aa). The chain crosses the membrane as a helical span at residues 616-636; it reads ITAWVFSGVATFYGTYWDIVL. The Extracellular portion of the chain corresponds to 637–660; it reads DWGLLQRGCKNSFLRDKLLVPHKT. A helical membrane pass occupies residues 661–681; that stretch reads VYYAAMVLNVLLRLVWLQTVL. Over 682-745 the chain is Cytoplasmic; that stretch reads DLKFSFLHRE…YEEDGDHHNN (64 aa).

It belongs to the SYG1 (TC 2.A.94) family. As to expression, expressed in root epidermis and cortex, leaf hydathodes, pollen grains and stigma apex.

It is found in the cell membrane. Its function is as follows. May transport inorganic phosphate (Pi). In Arabidopsis thaliana (Mouse-ear cress), this protein is Phosphate transporter PHO1 homolog 4 (PHO1-H4).